The primary structure comprises 168 residues: MPRSRINGNFIDKTFSIVANILLRIIPTTSGEKEAFTYYRDGMSAQSEGNYAEALQNYYEAMRLEIDPYDRSYILYNIGLIHTSNGEHTKALEYYFRALERNPFLPQAFNNMAVICHYRGEQAIRQGDSEIAEAWFDQAAEYWKQAIALTPGNYIEAHNWLKITRRFE.

TPR repeat units lie at residues 35–68, 72–105, and 120–153; these read AFTY…EIDP, SYIL…NPFL, and GEQA…TPGN.

It belongs to the Ycf3 family.

It localises to the plastid. Its subcellular location is the chloroplast thylakoid membrane. Functionally, essential for the assembly of the photosystem I (PSI) complex. May act as a chaperone-like factor to guide the assembly of the PSI subunits. This Lactuca sativa (Garden lettuce) protein is Photosystem I assembly protein Ycf3.